Reading from the N-terminus, the 542-residue chain is MESQRNILLIGLLFVSFLLWQQWQADKAPQPVAQTQSSVAPSTVADAHSSDVPDADSALPETVTASKELITVTTDQFVLKIDPVGGDIVHSALLSHKLEQDGDDPFVLLEQTNDIYYIAQSGLIGRDGIDSSTTGRAHFDSASREYDLAGQDTLEVPLTYLAANGVTYTKLFTFYRGKHNVDVDYQINNTSDAQLQVQMYGQIKHSIKKSESSMMMPTYRGAAFSTADTRYEKYSFDDMADKNLNKSTLGGWVAMLQHYFVSAWVPPENDKNIIFSSVSAGGLANIGFRGALYDIAPGTEQSIKAQFYVGPKDQEALSALSESLNLVVDYGFLWWLAIPIHWLLMFYQSFVGNWGVAIILITLTVRGMLYPLTKAQYTSMAKMRNLQPKLADMKERFGDDRQKMGQAMMELYKKEKVNPMGGCLPILLQMPIFIALYWVLLESYELRHAPFMLWITDLSVQDPYYVMPILMGVSMFIMQKMQPMAPTMDPMQVKMMQWMPVIFTVFFLWFPAGLVLYWLVGNLVAITQQKIIYAGLEKKGLK.

A helical transmembrane segment spans residues 6 to 26; sequence NILLIGLLFVSFLLWQQWQAD. Positions 32-41 are enriched in polar residues; sequence VAQTQSSVAP. The interval 32–57 is disordered; the sequence is VAQTQSSVAPSTVADAHSSDVPDADS. The next 5 membrane-spanning stretches (helical) occupy residues 326 to 346, 350 to 370, 421 to 441, 458 to 478, and 501 to 521; these read LVVD…LLMF, FVGN…GMLY, GGCL…WVLL, LSVQ…MFIM, and VIFT…WLVG.

The protein belongs to the OXA1/ALB3/YidC family. Type 1 subfamily. In terms of assembly, interacts with the Sec translocase complex via SecD. Specifically interacts with transmembrane segments of nascent integral membrane proteins during membrane integration.

It is found in the cell inner membrane. In terms of biological role, required for the insertion and/or proper folding and/or complex formation of integral membrane proteins into the membrane. Involved in integration of membrane proteins that insert both dependently and independently of the Sec translocase complex, as well as at least some lipoproteins. Aids folding of multispanning membrane proteins. This chain is Membrane protein insertase YidC, found in Shewanella piezotolerans (strain WP3 / JCM 13877).